Consider the following 157-residue polypeptide: MGVFNFEDETTSIVAPARLYKALVTDSDNLIPKVIDAIQSIEIVEGNGGAGTIKKLTFVEGGETKYDLHKVDLVDDVNFAYNYSIVGGGGLPDTVEKISFESKLSAGPDGGSTAKLTVKYFTKGDAAPSEEEIKGGKARGDGLFKALEGYVLANPDY.

The protein belongs to the BetVI family. As to expression, high levels in roots and not detectable in hypocotyls, cotyledons, stems, leaves and flower buds of untreated plants. After induction, high levels are present in the vascular bundles of leaves.

The protein resides in the cytoplasm. The polypeptide is Class-10 pathogenesis-related protein 1 (MSPR10-1) (Medicago sativa (Alfalfa)).